Reading from the N-terminus, the 463-residue chain is Interferon-inducible GTPase 5 (463 aa).

The IRG-type G domain occupies 52–234 (TRLEVGVTGE…PMLVTTWEHD (183 aa)). Residues 61–68 (ESGAGKSS), 86–90 (TGVVE), 168–170 (KVD), and 215–217 (SNL) each bind GTP. Phosphoserine is present on residues S246 and S303. Positions 409 to 438 (QGEVSLEAAGDNAVEKRSSGEGTSEEAPLS) are disordered.

Belongs to the TRAFAC class dynamin-like GTPase superfamily. IRG family.

Its subcellular location is the cell projection. It is found in the cilium. The protein localises to the flagellum. The protein resides in the lipid droplet. It catalyses the reaction GTP + H2O = GDP + phosphate + H(+). In terms of biological role, required for sperm motility and therefore male fertility, via positive regulation of spermatozoa fibrous sheath formation. In Rattus norvegicus (Rat), this protein is Interferon-inducible GTPase 5 (Irgc).